A 266-amino-acid chain; its full sequence is Glucosamine-6-phosphate deaminase (266 aa).

Aspartate 72 serves as the catalytic Proton acceptor; for enolization step. The active-site For ring-opening step is the aspartate 141. Histidine 143 serves as the catalytic Proton acceptor; for ring-opening step. The active-site For ring-opening step is the glutamate 148.

The protein belongs to the glucosamine/galactosamine-6-phosphate isomerase family. NagB subfamily. In terms of assembly, homohexamer.

The enzyme catalyses alpha-D-glucosamine 6-phosphate + H2O = beta-D-fructose 6-phosphate + NH4(+). Its pathway is amino-sugar metabolism; N-acetylneuraminate degradation; D-fructose 6-phosphate from N-acetylneuraminate: step 5/5. Allosterically activated by N-acetylglucosamine 6-phosphate (GlcNAc6P). In terms of biological role, catalyzes the reversible isomerization-deamination of glucosamine 6-phosphate (GlcN6P) to form fructose 6-phosphate (Fru6P) and ammonium ion. The chain is Glucosamine-6-phosphate deaminase from Pectobacterium atrosepticum (strain SCRI 1043 / ATCC BAA-672) (Erwinia carotovora subsp. atroseptica).